A 385-amino-acid polypeptide reads, in one-letter code: S-adenosylmethionine synthase (385 aa).

Histidine 16 lines the ATP pocket. Aspartate 18 lines the Mg(2+) pocket. Glutamate 44 serves as a coordination point for K(+). Residues glutamate 57 and glutamine 100 each coordinate L-methionine. The interval 100-110 is flexible loop; the sequence is QSPDINQGVDR. ATP-binding positions include 164 to 166, 230 to 231, aspartate 239, 245 to 246, alanine 262, and lysine 266; these read DGK, KF, and RK. L-methionine is bound at residue aspartate 239. L-methionine is bound at residue lysine 270.

Belongs to the AdoMet synthase family. In terms of assembly, homotetramer; dimer of dimers. Mg(2+) serves as cofactor. Requires K(+) as cofactor.

Its subcellular location is the cytoplasm. The enzyme catalyses L-methionine + ATP + H2O = S-adenosyl-L-methionine + phosphate + diphosphate. Its pathway is amino-acid biosynthesis; S-adenosyl-L-methionine biosynthesis; S-adenosyl-L-methionine from L-methionine: step 1/1. In terms of biological role, catalyzes the formation of S-adenosylmethionine (AdoMet) from methionine and ATP. The overall synthetic reaction is composed of two sequential steps, AdoMet formation and the subsequent tripolyphosphate hydrolysis which occurs prior to release of AdoMet from the enzyme. The chain is S-adenosylmethionine synthase from Helicobacter pylori (strain P12).